We begin with the raw amino-acid sequence, 385 residues long: m7GpppN-mRNA hydrolase (385 aa).

A Nudix hydrolase domain is found at 95–226 (MGVPTYGAII…KLGLAPNKFF (132 aa)). Residues 129–150 (GKVNKEEAPHDCAAREVFEETG) carry the Nudix box motif. Residues E144 and E148 each contribute to the Mn(2+) site. S246, S247, S249, S276, and S284 each carry phosphoserine. Residues 247–266 (SDSDNGFSSTGSTPAKPTVE) are disordered. Positions 249–259 (SDNGFSSTGST) are enriched in low complexity.

This sequence belongs to the Nudix hydrolase family. DCP2 subfamily. In terms of assembly, found in a mRNA decay complex with LSM1, LSM3, LSM4, EXOSC2, EXOSC4, EXOSC10, PARN, XRN1, CNOT6, UPF1, UPF2 and UPF3B. Forms a complex with DCP1A, EDC3, DDX6 and EDC4/HEDLS, within this complex directly interacts with EDC4/HEDLS. Interacts with DPC1B, UPF1, UPF2 and UPF3B. Associates with polysomes. Interacts (via N-terminus and C-terminus) with TRIM21 (via N-terminus and C-terminus). Interacts with LIMD1, WTIP and AJUBA. Interacts with DDX17 in an RNA-dependent manner. Interacts with ZC3HAV1. Interacts with APOBEC3G in an RNA-dependent manner. Interacts with ZFP36L1 (via N-terminus). Interacts with NBDY. It depends on Mn(2+) as a cofactor. Mg(2+) serves as cofactor.

It localises to the cytoplasm. Its subcellular location is the P-body. The protein localises to the nucleus. The enzyme catalyses a 5'-end (N(7)-methyl 5'-triphosphoguanosine)-ribonucleoside in mRNA + H2O = N(7)-methyl-GDP + a 5'-end phospho-ribonucleoside in mRNA + 2 H(+). Functionally, decapping metalloenzyme that catalyzes the cleavage of the cap structure on mRNAs. Removes the 7-methyl guanine cap structure from mRNA molecules, yielding a 5'-phosphorylated mRNA fragment and 7m-GDP. Necessary for the degradation of mRNAs, both in normal mRNA turnover and in nonsense-mediated mRNA decay. Plays a role in replication-dependent histone mRNA degradation. Has higher activity towards mRNAs that lack a poly(A) tail. Has no activity towards a cap structure lacking an RNA moiety. The presence of a N(6)-methyladenosine methylation at the second transcribed position of mRNAs (N(6),2'-O-dimethyladenosine cap; m6A(m)) provides resistance to DCP2-mediated decapping. Blocks autophagy in nutrient-rich conditions by repressing the expression of ATG-related genes through degradation of their transcripts. In Pongo abelii (Sumatran orangutan), this protein is m7GpppN-mRNA hydrolase (DCP2).